We begin with the raw amino-acid sequence, 183 residues long: MKTINFITGNKNKLAEVRAIIGNVVDVQNQTVDVPEIQGTIEEIAKEKCRHAANAVGGPVLTEDTALGFHALKGLPGPYIKFFLEALGHEGLNKMLDGFESRGAEAVCTFAFSPGPGSEPILFQGRTEGVIVSPRGPANFGWDPIFEYEGQTYAEMTKEEKNKISHRYKALVKLQQWLVDELS.

8–13 (TGNKNK) contributes to the ITP binding site. Position 36 (Glu-36) interacts with Mg(2+). ITP is bound by residues Lys-48, 64–65 (DT), Lys-81, 140–143 (FGWD), Lys-161, and 166–167 (HR).

The protein belongs to the HAM1 NTPase family. Homodimer. It depends on Mg(2+) as a cofactor. The cofactor is Mn(2+).

The protein localises to the cytoplasm. It is found in the nucleus. The catalysed reaction is ITP + H2O = IMP + diphosphate + H(+). It catalyses the reaction dITP + H2O = dIMP + diphosphate + H(+). The enzyme catalyses XTP + H2O = XMP + diphosphate + H(+). Pyrophosphatase that hydrolyzes non-canonical purine nucleotides such as inosine triphosphate (ITP), deoxyinosine triphosphate (dITP) or xanthosine 5'-triphosphate (XTP) to their respective monophosphate derivatives. The enzyme does not distinguish between the deoxy- and ribose forms. Probably excludes non-canonical purines from RNA and DNA precursor pools, thus preventing their incorporation into RNA and DNA and avoiding chromosomal lesions. The polypeptide is Inosine triphosphate pyrophosphatase (Emericella nidulans (strain FGSC A4 / ATCC 38163 / CBS 112.46 / NRRL 194 / M139) (Aspergillus nidulans)).